The following is a 232-amino-acid chain: 5'-methylthioadenosine/S-adenosylhomocysteine nucleosidase (232 aa).

The active-site Proton acceptor is glutamate 12. Substrate-binding positions include glycine 78, isoleucine 152, and 173 to 174; that span reads ME. Aspartate 197 serves as the catalytic Proton donor.

The protein belongs to the PNP/UDP phosphorylase family. MtnN subfamily. Homodimer.

The enzyme catalyses S-adenosyl-L-homocysteine + H2O = S-(5-deoxy-D-ribos-5-yl)-L-homocysteine + adenine. It carries out the reaction S-methyl-5'-thioadenosine + H2O = 5-(methylsulfanyl)-D-ribose + adenine. It catalyses the reaction 5'-deoxyadenosine + H2O = 5-deoxy-D-ribose + adenine. It functions in the pathway amino-acid biosynthesis; L-methionine biosynthesis via salvage pathway; S-methyl-5-thio-alpha-D-ribose 1-phosphate from S-methyl-5'-thioadenosine (hydrolase route): step 1/2. Its function is as follows. Catalyzes the irreversible cleavage of the glycosidic bond in both 5'-methylthioadenosine (MTA) and S-adenosylhomocysteine (SAH/AdoHcy) to adenine and the corresponding thioribose, 5'-methylthioribose and S-ribosylhomocysteine, respectively. Also cleaves 5'-deoxyadenosine, a toxic by-product of radical S-adenosylmethionine (SAM) enzymes, into 5-deoxyribose and adenine. Thus, is required for in vivo function of the radical SAM enzymes biotin synthase and lipoic acid synthase, that are inhibited by 5'-deoxyadenosine accumulation. In Escherichia fergusonii (strain ATCC 35469 / DSM 13698 / CCUG 18766 / IAM 14443 / JCM 21226 / LMG 7866 / NBRC 102419 / NCTC 12128 / CDC 0568-73), this protein is 5'-methylthioadenosine/S-adenosylhomocysteine nucleosidase.